The following is an 81-amino-acid chain: Defensin-like protein 43 (81 aa).

The first 27 residues, 1 to 27 (MGITKTSVTFLFLLILAAFVSNYNVLA), serve as a signal peptide directing secretion. 4 cysteine pairs are disulfide-bonded: Cys40-Cys79, Cys44-Cys67, Cys53-Cys77, and Cys57-Cys78.

Belongs to the DEFL family.

The protein resides in the secreted. The polypeptide is Defensin-like protein 43 (Arabidopsis thaliana (Mouse-ear cress)).